Here is a 739-residue protein sequence, read N- to C-terminus: Xylosyl- and glucuronyltransferase LARGE2s (739 aa).

Topologically, residues 1–10 (MLCSWRVKLK) are cytoplasmic. A helical; Signal-anchor for type II membrane protein membrane pass occupies residues 11 to 31 (LLLATITLAVLLSWLYLFVGS). Residues 32–739 (LEYGRFLLLP…LKYLTAERNL (708 aa)) are Lumenal-facing. The interval 80-105 (AEGSDGNPQWAASAEDGPPLGGERNN) is disordered. N-linked (GlcNAc...) asparagine glycans are attached at residues Asn-105, Asn-131, and Asn-217. A xylosyltransferase activity region spans residues 121 to 396 (LHVAIVCAGH…FLEYDGNLLR (276 aa)). Residues Asp-225 and Asp-227 each coordinate Mn(2+). The N-linked (GlcNAc...) asparagine glycan is linked to Asn-255. Residues 397–739 (RELFGCASLP…LKYLTAERNL (343 aa)) are glucuronyltransferase activity. Residues Asp-546 and Asp-548 each coordinate Mn(2+).

It in the C-terminal section; belongs to the glycosyltransferase 49 family. In the N-terminal section; belongs to the glycosyltransferase 8 family. Requires Mn(2+) as cofactor.

Its subcellular location is the golgi apparatus membrane. The catalysed reaction is 3-O-[beta-D-GlcA-(1-&gt;3)-beta-D-Xyl-(1-&gt;4)-Rib-ol-P-Rib-ol-P-3-beta-D-GalNAc-(1-&gt;3)-beta-D-GlcNAc-(1-&gt;4)-(O-6-P-alpha-D-Man)]-Thr-[protein] + UDP-alpha-D-xylose = 3-O-[alpha-D-Xyl-(1-&gt;3)-beta-D-GlcA-(1-&gt;4)-beta-D-Xyl-(1-&gt;4)-Rib-ol-P-Rib-ol-P-3-beta-D-GalNAc-(1-&gt;3)-beta-D-GlcNAc-(1-&gt;4)-(O-6-P-alpha-D-Man)]-Thr-[protein] + UDP + H(+). It catalyses the reaction 3-O-{(1-&gt;[3)-alpha-D-Xyl-(1-&gt;3)-beta-D-GlcA-(1-&gt;](n)-4)-beta-D-Xyl-(1-&gt;4)-Rib-ol-P-Rib-ol-P-3-beta-D-GalNAc-(1-&gt;3)-beta-D-GlcNAc-(1-&gt;4)-O-6-P-alpha-D-Man}-L-Thr-[protein] + UDP-alpha-D-glucuronate = 3-O-{beta-D-GlcA-(1-&gt;[3)-alpha-D-Xyl-(1-&gt;3)-beta-D-GlcA-(1-&gt;](n)-4)-beta-D-Xyl-(1-&gt;4)-Rib-ol-P-Rib-ol-P-3-beta-D-GalNAc-(1-&gt;3)-beta-D-GlcNAc-(1-&gt;4)-O-6-P-alpha-D-Man}-L-Thr-[protein] + UDP + H(+). The enzyme catalyses 3-O-{beta-D-GlcA-(1-&gt;[3)-alpha-D-Xyl-(1-&gt;3)-beta-D-GlcA-(1-&gt;](n)-4)-beta-D-Xyl-(1-&gt;4)-Rib-ol-P-Rib-ol-P-3-beta-D-GalNAc-(1-&gt;3)-beta-D-GlcNAc-(1-&gt;4)-O-6-P-alpha-D-Man}-L-Thr-[protein] + UDP-alpha-D-xylose = 3-O-{(1-&gt;[3)-alpha-D-Xyl-(1-&gt;3)-beta-D-GlcA-(1-&gt;](n+1)-4)-beta-D-Xyl-(1-&gt;4)-Rib-ol-P-Rib-ol-P-3-beta-D-GalNAc-(1-&gt;3)-beta-D-GlcNAc-(1-&gt;4)-O-6-P-alpha-D-Man}-L-Thr-[protein] + UDP + H(+). It participates in protein modification; protein glycosylation. Bifunctional glycosyltransferase with both alpha-1,3-xylosyltransferase and beta-1,3-glucuronyltransferase activities involved in the maturation of alpha-dystroglycan (DAG1) by glycosylation leading to DAG1 binding to laminin G-like domain-containing extracellular proteins with high affinity and in a phosphorylated-O-mannosyl trisaccharide dependent manner. Elongates the glucuronyl-beta-1,4-xylose-beta disaccharide primer structure by adding repeating units [-3-Xylose-alpha-1,3-GlcA-beta-1-] to produce a heteropolysaccharide. Supports the maturation of DAG1 more effectively than LARGE1. In addition, can modify both heparan sulfate (HS)- and chondroitin/dermatan sulfate (CS/DS)-proteoglycans (PGs), namely GPC4, with a glycosaminoglycan (GAG)-like polysaccharide composed of xylose and glucuronic acid to confer laminin binding. This Gallus gallus (Chicken) protein is Xylosyl- and glucuronyltransferase LARGE2s.